We begin with the raw amino-acid sequence, 36 residues long: Photosystem I reaction center subunit VIII (36 aa).

Residues 6–28 traverse the membrane as a helical segment; that stretch reads LPSIFVPLIGLFFPAIAMASLFL.

This sequence belongs to the PsaI family.

The protein localises to the plastid. The protein resides in the chloroplast thylakoid membrane. Functionally, may help in the organization of the PsaL subunit. This chain is Photosystem I reaction center subunit VIII, found in Amborella trichopoda.